We begin with the raw amino-acid sequence, 716 residues long: MRKIIPINNNWYFKADYEEGYEKVDDLRSFENVNLPHTNIELPYNYFDEKMYQIKSCYKYPLHISEKYRDKVIYIHFEGVMAYAQVYLNGLYIGEHKGGYTPFDIRIDEVYDWKKELNMLTVVVDSTERSDIPPKGGQIDYLTYGGIYREVSLGIYDDVFIKNIKVETHGIYDNEKSLNLIVHLENLNHQSGNVKFKVKINDKNGKEVFYKEFNTYLDAVKDVYSFNIENLKDIKLWDVDNPNLYEIKVGMKINNFSDEYDNKFGFREAVFKPDGFYLNGRKLKLRGLNRHQSYPYVGYAMPRRVQEKDAEILKNELHLNIVRTSHYPQSKHFLNKCDELGLLVFEEIPGWQYIGNSEWKKVAEQNLREMITRDWNHPSIILWGVRINESQDDDAFYKNMNKIAHEIDPTRQTGGVRYITNSSFLEDVYTFNDFIHDGINKPLRKQQEVTGLEHNVPYLVTEYNGHMYPTKRFDNEERQMEHCLRHLRIQNASYLDDSISGAIGWCAFDYNTHKDFGSGDRICYHGVMDMFRLPKFASYVYKSQVSPDIEPILEPVTFWARGERSIGGVIPLIIFTNCDYIELQYGNKTKIDNIYPNRDAYKGIPYPPIIIDYDIVKPEMIGAWGMVWEDLTLKGFYKGNKVIERKFSREPIPTYLYVVPDDTILSATQKDATRIVVKILDQYGNLLPFINEVIKIEIEGPAKLQGPNEVALIGGA.

Catalysis depends on Glu-389, which acts as the Proton donor. Glu-462 functions as the Nucleophile in the catalytic mechanism.

This sequence belongs to the glycosyl hydrolase 2 family. Homodimer.

The enzyme catalyses Hydrolysis of terminal non-reducing beta-D-galactose residues in beta-D-galactosides.. Its function is as follows. Displays beta-galactosidase activity with the artificial chromogenic substrate o-nitrophenyl-beta-D-galactopyranoside (ONPG). The chain is Beta-galactosidase from Thermoanaerobacterium thermosulfurigenes (Clostridium thermosulfurogenes).